The chain runs to 286 residues: AB hydrolase superfamily protein YfhM (286 aa).

The AB hydrolase-1 domain maps to 27 to 272 (PLIVLLHGFP…ASHWINHEKP (246 aa)). Aspartate 103 acts as the Nucleophile in catalysis. Tyrosine 210 (proton donor) is an active-site residue. Histidine 265 serves as the catalytic Proton acceptor.

This sequence belongs to the AB hydrolase superfamily. Epoxide hydrolase family.

The chain is AB hydrolase superfamily protein YfhM (yfhM) from Bacillus subtilis (strain 168).